A 105-amino-acid polypeptide reads, in one-letter code: DNA-directed RNA polymerases I and III subunit RPAC2 (105 aa).

It belongs to the archaeal Rpo11/eukaryotic RPB11/RPC19 RNA polymerase subunit family. As to quaternary structure, component of the RNA polymerase I (Pol I) and RNA polymerase III (Pol III) complexes consisting of at least 13 and 17 subunits, respectively.

Its subcellular location is the nucleus. Its function is as follows. DNA-dependent RNA polymerase catalyzes the transcription of DNA into RNA using the four ribonucleoside triphosphates as substrates. Common core component of RNA polymerases I and III which synthesize ribosomal RNA precursors and small RNAs, such as 5S rRNA and tRNAs, respectively. The sequence is that of DNA-directed RNA polymerases I and III subunit RPAC2 from Drosophila melanogaster (Fruit fly).